Consider the following 225-residue polypeptide: Uracil-DNA glycosylase (225 aa).

Asp65 functions as the Proton acceptor in the catalytic mechanism.

It belongs to the uracil-DNA glycosylase (UDG) superfamily. UNG family.

It is found in the cytoplasm. The enzyme catalyses Hydrolyzes single-stranded DNA or mismatched double-stranded DNA and polynucleotides, releasing free uracil.. Functionally, excises uracil residues from the DNA which can arise as a result of misincorporation of dUMP residues by DNA polymerase or due to deamination of cytosine. This chain is Uracil-DNA glycosylase, found in Bacillus thuringiensis (strain Al Hakam).